Reading from the N-terminus, the 708-residue chain is Ion-translocating oxidoreductase complex subunit C (708 aa).

4Fe-4S ferredoxin-type domains lie at 369 to 397 and 407 to 436; these read GEPQEEQSCIRCSACADACPADLLPQQLY and KATTHNIADCIECGACAWVCPSNIPLVQYF. [4Fe-4S] cluster contacts are provided by Cys377, Cys380, Cys383, Cys387, Cys416, Cys419, Cys422, and Cys426. The disordered stretch occupies residues 599–686; it reads KARKLEQQQS…EEQVDPRKAA (88 aa).

This sequence belongs to the 4Fe4S bacterial-type ferredoxin family. RnfC subfamily. The complex is composed of six subunits: RsxA, RsxB, RsxC, RsxD, RsxE and RsxG. Requires [4Fe-4S] cluster as cofactor.

The protein resides in the cell inner membrane. Functionally, part of a membrane-bound complex that couples electron transfer with translocation of ions across the membrane. Required to maintain the reduced state of SoxR. The sequence is that of Ion-translocating oxidoreductase complex subunit C from Escherichia coli (strain 55989 / EAEC).